We begin with the raw amino-acid sequence, 540 residues long: Chaperonin GroEL (540 aa).

ATP is bound by residues 30-33, Lys-51, 87-91, Gly-415, 479-481, and Asp-495; these read TLGP, DGTTT, and NAA.

Belongs to the chaperonin (HSP60) family. As to quaternary structure, forms a cylinder of 14 subunits composed of two heptameric rings stacked back-to-back. Interacts with the co-chaperonin GroES.

It is found in the cytoplasm. It catalyses the reaction ATP + H2O + a folded polypeptide = ADP + phosphate + an unfolded polypeptide.. Functionally, together with its co-chaperonin GroES, plays an essential role in assisting protein folding. The GroEL-GroES system forms a nano-cage that allows encapsulation of the non-native substrate proteins and provides a physical environment optimized to promote and accelerate protein folding. This Pectobacterium carotovorum subsp. carotovorum (Erwinia carotovora subsp. carotovora) protein is Chaperonin GroEL.